Reading from the N-terminus, the 513-residue chain is Protein phosphatase 1H (513 aa).

A Phosphoserine modification is found at S7. Positions 77 to 506 (ATGYAEVINA…DDISVYVIPL (430 aa)) constitute a PPM-type phosphatase domain. A disordered region spans residues 109 to 133 (TITSTPNRNSKRRSSLPNGEGLQLK). A Phosphothreonine modification is found at T113. A phosphoserine mark is found at S123 and S210. R212 carries the omega-N-methylarginine modification. S220 carries the post-translational modification Phosphoserine. A Phosphothreonine modification is found at T223. Position 421 is a phosphoserine (S421).

Belongs to the PP2C family.

It localises to the nucleus. The protein localises to the cytoplasm. The enzyme catalyses O-phospho-L-seryl-[protein] + H2O = L-seryl-[protein] + phosphate. It catalyses the reaction O-phospho-L-threonyl-[protein] + H2O = L-threonyl-[protein] + phosphate. Functionally, dephosphorylates CDKN1B at 'Thr-187', thus removing a signal for proteasomal degradation. The protein is Protein phosphatase 1H (Ppm1h) of Mus musculus (Mouse).